A 677-amino-acid polypeptide reads, in one-letter code: DNA polymerase epsilon subunit B (677 aa).

Belongs to the DNA polymerase epsilon subunit B family. Heterotetramer. Consists of four subunits: POL2, DPB2, DPB3 and DPB4.

Its subcellular location is the nucleus. Functionally, as accessory component of the DNA polymerase epsilon (DNA polymerase II) participates in chromosomal DNA replication. This chain is DNA polymerase epsilon subunit B (DPB2), found in Eremothecium gossypii (strain ATCC 10895 / CBS 109.51 / FGSC 9923 / NRRL Y-1056) (Yeast).